Reading from the N-terminus, the 320-residue chain is MRSAQVYRWQIPMDAGVVLRDRRLKTRDGLYVCLRDGEREGWGEISPLPGFSQETWEEAQTALLTWVNDWLQGSEGLPEMPSVAFGASCALAELTGVLPEAADYRAAPLCTGDPDDLVLRLADMPGEKIAKVKVGLYEAVRDGMVVNVLLEAIPDLHLRLDANRAWTPLKAQQFAKYVNPDYRARIAFLEEPCKTRDDSRAFARETGIAIAWDESLREADFTFEAEEGVRAVVIKPTLTGSLDKVREQVAAAHALGLTAVISSSIESSLGLTQLARIAAWLTPGTLPGLDTLHLMQAQQIRPWPGSALPCLKREELERLL.

The active-site Proton donor is the lysine 133. Mg(2+) is bound by residues aspartate 161, glutamate 190, and aspartate 213. Lysine 235 (proton acceptor) is an active-site residue.

This sequence belongs to the mandelate racemase/muconate lactonizing enzyme family. MenC type 1 subfamily. It depends on a divalent metal cation as a cofactor.

It carries out the reaction (1R,6R)-6-hydroxy-2-succinyl-cyclohexa-2,4-diene-1-carboxylate = 2-succinylbenzoate + H2O. The protein operates within quinol/quinone metabolism; 1,4-dihydroxy-2-naphthoate biosynthesis; 1,4-dihydroxy-2-naphthoate from chorismate: step 4/7. It functions in the pathway quinol/quinone metabolism; menaquinone biosynthesis. Its function is as follows. Converts 2-succinyl-6-hydroxy-2,4-cyclohexadiene-1-carboxylate (SHCHC) to 2-succinylbenzoate (OSB). This chain is o-succinylbenzoate synthase, found in Salmonella heidelberg (strain SL476).